The chain runs to 799 residues: DNA ligase (799 aa).

Basic and acidic residues predominate over residues 1–11 (MTEVKTGRVVD). Residues 1–35 (MTEVKTGRVVDDAPVNDAPENNAAEATSPARHDAI) form a disordered region. NAD(+)-binding positions include 67 to 71 (DAEYD), 116 to 117 (SL), and aspartate 147. The N6-AMP-lysine intermediate role is filled by lysine 149. NAD(+)-binding residues include arginine 170, glutamate 207, lysine 327, and lysine 351. Positions 445, 448, 463, and 468 each coordinate Zn(2+). The 90-residue stretch at 634 to 723 (AIVLPLQGLK…VASVDASEAV (90 aa)) folds into the BRCT domain. The tract at residues 720 to 799 (SEAVAEETPP…RGRAEQLKLF (80 aa)) is disordered. Over residues 755 to 767 (GSASGDDSRGAAA) the composition is skewed to low complexity. A compositionally biased stretch (basic and acidic residues) spans 787 to 799 (DVPRGRAEQLKLF).

It belongs to the NAD-dependent DNA ligase family. LigA subfamily. It depends on Mg(2+) as a cofactor. The cofactor is Mn(2+).

It carries out the reaction NAD(+) + (deoxyribonucleotide)n-3'-hydroxyl + 5'-phospho-(deoxyribonucleotide)m = (deoxyribonucleotide)n+m + AMP + beta-nicotinamide D-nucleotide.. Functionally, DNA ligase that catalyzes the formation of phosphodiester linkages between 5'-phosphoryl and 3'-hydroxyl groups in double-stranded DNA using NAD as a coenzyme and as the energy source for the reaction. It is essential for DNA replication and repair of damaged DNA. This is DNA ligase from Nitratidesulfovibrio vulgaris (strain ATCC 29579 / DSM 644 / CCUG 34227 / NCIMB 8303 / VKM B-1760 / Hildenborough) (Desulfovibrio vulgaris).